The sequence spans 436 residues: MRQALPLVTRQGDRIAIVSGLRTPFARQATAFHGIPAVDLGKMVVGELLARSEIPADAIEQLVFGQVVQMPEAPNIAREIVLGTGMNVHTDAYSVSRACATSFQAVANVAESLMAGTIRAGIAGGADSSSVLPIGVSKALARVLVDVNKARTTRQRLTLFSRLRLRDLLPVPPAVAEYSTGLRMGDTAEQMAKTYGITREQQDALAHRSHQRAAQAWAEGKLAEEVMTTYVPPYKNPFAEDNNIRGTSTLADYAKLRPAFDRKHGSVTAANSTPLTDGAAAVILMTESRAKELGLHPLGYLRSYAFTAIDVWQDMLLGPAWSTPLALERAGLTMADLTLFDMHEAFAAQTLANLQLLGSERFAREVLGRAQATGEVDDAKFNVLGGSIAYGHPFAATGARMITQTLHELRRRGGGFGLVTACAAGGLGAAMVLEAK.

The active-site Acyl-thioester intermediate is C99. Residues H392 and C422 each act as proton acceptor in the active site.

The protein belongs to the thiolase-like superfamily. Thiolase family. As to quaternary structure, heterotetramer of two alpha chains (FadJ) and two beta chains (FadI).

The protein resides in the cytoplasm. It carries out the reaction an acyl-CoA + acetyl-CoA = a 3-oxoacyl-CoA + CoA. The protein operates within lipid metabolism; fatty acid beta-oxidation. Its function is as follows. Catalyzes the final step of fatty acid oxidation in which acetyl-CoA is released and the CoA ester of a fatty acid two carbons shorter is formed. The chain is 3-ketoacyl-CoA thiolase from Salmonella newport (strain SL254).